The primary structure comprises 981 residues: Alpha-mannosidase (981 aa).

Residues His23, Asp25, and Asp145 each contribute to the Zn(2+) site. The active-site Nucleophile is the Asp145. Asn312 is a glycosylation site (N-linked (GlcNAc...) asparagine). A Zn(2+)-binding site is contributed by His386. 3 disulfides stabilise this stretch: Cys422–Cys432, Cys442–Cys450, and Cys800–Cys807. Asn446 carries N-linked (GlcNAc...) asparagine glycosylation. Residues 938–957 (KKMKWSVEGDNEQEPQAVRG) form a disordered region.

This sequence belongs to the glycosyl hydrolase 38 family. In terms of assembly, dimer of dimers of heavy and light subunits. Zn(2+) is required as a cofactor. Post-translationally, produced as a precursor which is then proteolytically cleaved into a 66kD heavy subunit and a 44kD light subunit. Cleavage probably occurs in protein bodies/protein storage vacuoles.

Its subcellular location is the protein storage vacuole. The enzyme catalyses Hydrolysis of terminal, non-reducing alpha-D-mannose residues in alpha-D-mannosides.. With respect to regulation, inhibited by 2,3,4,6-tetra-O-acetyl-5-fluoro-beta-L-gulopyranosyl fluoride which acts as a slow substrate, doubling as a competitive inhibitor as it forms a high steady state concentration of glycosyl-enzyme intermediate that blocks the active site. Inhibited by 2,3,4,6-tetra-O-acetyl-5-fluoro-alpha-D-mannopyranosyl fluoride which also acts as a slow substrate but no intermediates accumulate. Inhibited by EDTA. Inhibited by metal ion Cu(2+). Inhibited by metal ions Fe(2+), Cd(2+) and Co(2+). Inhibited by metal ions Ag(+) and Hg(2+). Competitively inhibited by mannono-1-4-lactone and mannono-1-5-lactone. Inhibited by swainsonine but not by 1-desoxymannojirimycin. Inhibited by pyrrolidine-3,4-diol derivatives. Its function is as follows. Liberates mannose from p-nitrophenyl-alpha-D-mannoside. Liberates mannose from further alpha-D-mannosides including methyl-, benzyl-alpha-D-mannoside, 1-6-linked di-, tri- and tetrasaccharides of alpha-D-mannose and mannosyl-rhamnose. Liberates mannose from various glycoproteins like ovalbumin and ovomucoid. Does not hydrolyze beta-D-mannosides. Has glycosyltransferase activity, forming disaccharides from mannose and lyxose but not from glucose, galactose, ribose, xylose or arabinose. The sequence is that of Alpha-mannosidase from Canavalia ensiformis (Jack bean).